A 100-amino-acid polypeptide reads, in one-letter code: Large ribosomal subunit protein bL21 (100 aa).

This sequence belongs to the bacterial ribosomal protein bL21 family. In terms of assembly, part of the 50S ribosomal subunit. Contacts protein L20.

This protein binds to 23S rRNA in the presence of protein L20. This chain is Large ribosomal subunit protein bL21, found in Wolbachia sp. subsp. Drosophila simulans (strain wRi).